The sequence spans 162 residues: UPF0262 protein HNE_1347 (162 aa).

It belongs to the UPF0262 family.

This is UPF0262 protein HNE_1347 from Hyphomonas neptunium (strain ATCC 15444).